The chain runs to 325 residues: D site-binding protein (325 aa).

Disordered regions lie at residues 1–98 (MARP…AGPS), 124–203 (LEHG…EVLM), and 230–256 (FSEE…QKDE). Positions 17–28 (GPAGAPPGGGAL) are enriched in gly residues. Over residues 71–80 (AGPADAPSGA) the composition is skewed to low complexity. Serine 86 carries the phosphoserine modification. Low complexity predominate over residues 88-98 (RGRSGPVAGPS). The span at 129-153 (PPSPPPPGGLSPAPSPARTPAPSPG) shows a compositional bias: pro residues. Over residues 154–171 (PGSCSSSSPRSSPGHAPA) the composition is skewed to low complexity. Positions 255–318 (DEKYWSRRYK…SHYRAVLSRY (64 aa)) constitute a bZIP domain. Residues 257–279 (KYWSRRYKNNEAAKRSRDARRLK) are basic motif. Residues 283-297 (ISVRAAFLEKENALL) are leucine-zipper.

Belongs to the bZIP family. PAR subfamily. Binds DNA as a homodimer or a heterodimer. Can form a heterodimer with TEF. As to expression, expressed in the suprachiasmatic nuclei (SCN) and in most peripheral tissues, with a strong circadian rhythmicity.

It localises to the nucleus. Its function is as follows. This transcriptional activator recognizes and binds to the sequence 5'-RTTAYGTAAY-3' found in the promoter of genes such as albumin, CYP2A4 and CYP2A5. It is not essential for circadian rhythm generation, but modulates important clock output genes. May be a direct target for regulation by the circadian pacemaker component clock. May affect circadian period and sleep regulation. This chain is D site-binding protein (Dbp), found in Mus musculus (Mouse).